The following is a 209-amino-acid chain: MMENYITSFQLRFCPAAYLHLEQLPSLWRSILPYLPQWRDSAHLNAALLDEFSLDTDYEEPHGLGALPLQPQSQLELLLCRLGLVLHGEAIRRCVLASPLQQLLTLVNQETLRQIIVQHELLIGPWPTNWQRPLPTEIESRTMIQSGLAFWLAAMEPQPQAWCKRLSLRLPLATPSEPWLVAESQRPLAQTLCHKLVKQVMPTCSHLFK.

In terms of biological role, belongs to an operon involved in the translocation of Yop proteins across the bacterial membranes or in the specific control of this function. The protein is Yop proteins translocation protein K (yscK) of Yersinia enterocolitica.